Here is a 179-residue protein sequence, read N- to C-terminus: Protein GrpE (179 aa).

The tract at residues methionine 1–threonine 29 is disordered.

The protein belongs to the GrpE family. In terms of assembly, homodimer.

The protein resides in the cytoplasm. Functionally, participates actively in the response to hyperosmotic and heat shock by preventing the aggregation of stress-denatured proteins, in association with DnaK and GrpE. It is the nucleotide exchange factor for DnaK and may function as a thermosensor. Unfolded proteins bind initially to DnaJ; upon interaction with the DnaJ-bound protein, DnaK hydrolyzes its bound ATP, resulting in the formation of a stable complex. GrpE releases ADP from DnaK; ATP binding to DnaK triggers the release of the substrate protein, thus completing the reaction cycle. Several rounds of ATP-dependent interactions between DnaJ, DnaK and GrpE are required for fully efficient folding. The sequence is that of Protein GrpE from Janthinobacterium sp. (strain Marseille) (Minibacterium massiliensis).